Here is a 427-residue protein sequence, read N- to C-terminus: Zinc finger protein 134 (427 aa).

K20 participates in a covalent cross-link: Glycyl lysine isopeptide (Lys-Gly) (interchain with G-Cter in SUMO2). Residues 50–72 form a C2H2-type 1 zinc finger; it reads LPCDICGPILKDILHLDEHQGTH. The C2H2-type 2; degenerate zinc-finger motif lies at 78-100; sequence HTCGACGRQFWFSANLHQYQKCY. Glycyl lysine isopeptide (Lys-Gly) (interchain with G-Cter in SUMO2) cross-links involve residues K135 and K139. C2H2-type zinc fingers lie at residues 176–198, 204–226, 232–254, 260–282, 288–310, 316–338, 344–366, 372–394, and 400–422; these read YKCSECGKAFSRKDTLVQHQRIH, YECSECGKAFSRKATLVQHQRIH, YECSECGKTFSRKDNLTQHKRIH, YKCNECGKYFSHHSNLIVHQRVH, YKCSDCGKVFRHKSTLVQHESIH, YDCSDCGKSFGHKYTLIKHQRIH, FECIECGKFFSRSSDYIAHQRVH, FVCSKCGKDFIRTSHLVRHQRVH, and YECSECGKAYSLSSHLNRHQKVH.

This sequence belongs to the krueppel C2H2-type zinc-finger protein family.

It localises to the nucleus. In terms of biological role, may be involved in transcriptional regulation. The sequence is that of Zinc finger protein 134 (ZNF134) from Homo sapiens (Human).